A 278-amino-acid chain; its full sequence is HTH-type transcriptional activator RhaS (278 aa).

Residues 174-272 (NQLMAWLEDH…NWSPRDIRQG (99 aa)) enclose the HTH araC/xylS-type domain. 2 consecutive DNA-binding regions (H-T-H motif) follow at residues 191–212 (EAVA…KQHT) and 239–262 (VTEI…RREF).

As to quaternary structure, binds DNA as a dimer.

It is found in the cytoplasm. In terms of biological role, activates expression of the rhaBAD and rhaT operons. The polypeptide is HTH-type transcriptional activator RhaS (Salmonella agona (strain SL483)).